The following is a 242-amino-acid chain: Probable ABC transporter ATP-binding protein PEB1C (242 aa).

One can recognise an ABC transporter domain in the interval 2-236 (IELKNVNKYY…PKTERARLFL (235 aa)). 34–41 (GPSGSGKS) serves as a coordination point for ATP.

It belongs to the ABC transporter superfamily.

It is found in the cell inner membrane. Functionally, most probably involved, with PEB1, in a binding-protein-dependent transport system for an amino acid. Probably responsible for energy coupling to the transport system. This chain is Probable ABC transporter ATP-binding protein PEB1C (peb1C), found in Campylobacter jejuni subsp. jejuni serotype O:23/36 (strain 81-176).